The sequence spans 891 residues: DNA mismatch repair protein MutS (891 aa).

Residue 643–650 (GPNMGGKS) coordinates ATP.

The protein belongs to the DNA mismatch repair MutS family.

Its function is as follows. This protein is involved in the repair of mismatches in DNA. It is possible that it carries out the mismatch recognition step. This protein has a weak ATPase activity. This Xanthomonas campestris pv. campestris (strain ATCC 33913 / DSM 3586 / NCPPB 528 / LMG 568 / P 25) protein is DNA mismatch repair protein MutS.